The sequence spans 602 residues: Elongation factor 4 (602 aa).

The tr-type G domain occupies 7–189 (RNIRNFSIIA…AIVQRIPAPQ (183 aa)). GTP is bound by residues 19–24 (DHGKST) and 136–139 (NKID).

The protein belongs to the TRAFAC class translation factor GTPase superfamily. Classic translation factor GTPase family. LepA subfamily.

Its subcellular location is the cell inner membrane. It carries out the reaction GTP + H2O = GDP + phosphate + H(+). Required for accurate and efficient protein synthesis under certain stress conditions. May act as a fidelity factor of the translation reaction, by catalyzing a one-codon backward translocation of tRNAs on improperly translocated ribosomes. Back-translocation proceeds from a post-translocation (POST) complex to a pre-translocation (PRE) complex, thus giving elongation factor G a second chance to translocate the tRNAs correctly. Binds to ribosomes in a GTP-dependent manner. In Xylella fastidiosa (strain M23), this protein is Elongation factor 4.